The chain runs to 173 residues: Regulator of ribonuclease activity A (173 aa).

This sequence belongs to the RraA family. As to quaternary structure, homotrimer. Binds to both RNA-binding sites in the C-terminal region of Rne and to RhlB.

The protein localises to the cytoplasm. In terms of biological role, globally modulates RNA abundance by binding to RNase E (Rne) and regulating its endonucleolytic activity. Can modulate Rne action in a substrate-dependent manner by altering the composition of the degradosome. Modulates RNA-binding and helicase activities of the degradosome. The polypeptide is Regulator of ribonuclease activity A (Vibrio vulnificus (strain YJ016)).